The chain runs to 207 residues: Dephospho-CoA kinase (207 aa).

Positions 5 to 207 constitute a DPCK domain; the sequence is IVGLTGGIAS…AALQTHRIEN (203 aa). 13–18 is an ATP binding site; the sequence is ASGKSA.

It belongs to the CoaE family.

It is found in the cytoplasm. The enzyme catalyses 3'-dephospho-CoA + ATP = ADP + CoA + H(+). It participates in cofactor biosynthesis; coenzyme A biosynthesis; CoA from (R)-pantothenate: step 5/5. In terms of biological role, catalyzes the phosphorylation of the 3'-hydroxyl group of dephosphocoenzyme A to form coenzyme A. This Xanthomonas campestris pv. campestris (strain ATCC 33913 / DSM 3586 / NCPPB 528 / LMG 568 / P 25) protein is Dephospho-CoA kinase.